The chain runs to 201 residues: Large ribosomal subunit protein uL4 (201 aa).

A disordered region spans residues 46 to 71 (QKTRAEVVGSGKKPWRQKGTGRARAG).

It belongs to the universal ribosomal protein uL4 family. In terms of assembly, part of the 50S ribosomal subunit.

Its function is as follows. One of the primary rRNA binding proteins, this protein initially binds near the 5'-end of the 23S rRNA. It is important during the early stages of 50S assembly. It makes multiple contacts with different domains of the 23S rRNA in the assembled 50S subunit and ribosome. Forms part of the polypeptide exit tunnel. This chain is Large ribosomal subunit protein uL4, found in Shewanella woodyi (strain ATCC 51908 / MS32).